The primary structure comprises 101 residues: Growth-regulated alpha protein (101 aa).

Positions 1–28 (MAPATRSLLRAPLLLLLLLLATSRLATG) are cleaved as a signal peptide. 2 cysteine pairs are disulfide-bonded: cysteine 37/cysteine 63 and cysteine 39/cysteine 79.

The protein belongs to the intercrine alpha (chemokine CxC) family.

Its subcellular location is the secreted. Its function is as follows. Has chemotactic activity for neutrophils. This Cricetulus griseus (Chinese hamster) protein is Growth-regulated alpha protein (CXCL1).